Here is a 521-residue protein sequence, read N- to C-terminus: NAD(P)H-quinone oxidoreductase subunit 2 (521 aa).

The next 14 membrane-spanning stretches (helical) occupy residues 15-35, 42-62, 79-99, 109-126, 131-153, 167-187, 208-228, 242-262, 276-296, 304-324, 332-352, 376-396, 398-418, and 464-484; these read ILPEGVLVISLILVLLGDITF, WTPYLAIASLAACLYLLYTQW, LSIVFRAIIALSTLVTILMSV, IGEFMTVLLTATVGAMFL, ELVMIFISLETLSIASYLMTGYM, LLIGAASSAVFLYGLSLLYGL, LALVISLVFVIASVSFKIAAV, PTPVVAFLSVGSKAAGFALAI, WQFIFTALAILSMVLGNVVAI, MLAYSSIGQAGFVMIGLVIGT, VFYLLIYLFMNLGAFTCVILF, LALSLCLLSLGGIPPLAGFFG, LYLFWAGWQAGAYGLVLLGLI, and VGLVLTLIATSLAGVLSNPLL.

This sequence belongs to the complex I subunit 2 family. NDH-1 can be composed of about 15 different subunits; different subcomplexes with different compositions have been identified which probably have different functions.

It is found in the cellular thylakoid membrane. The enzyme catalyses a plastoquinone + NADH + (n+1) H(+)(in) = a plastoquinol + NAD(+) + n H(+)(out). It catalyses the reaction a plastoquinone + NADPH + (n+1) H(+)(in) = a plastoquinol + NADP(+) + n H(+)(out). NDH-1 shuttles electrons from an unknown electron donor, via FMN and iron-sulfur (Fe-S) centers, to quinones in the respiratory and/or the photosynthetic chain. The immediate electron acceptor for the enzyme in this species is believed to be plastoquinone. Couples the redox reaction to proton translocation, and thus conserves the redox energy in a proton gradient. Cyanobacterial NDH-1 also plays a role in inorganic carbon-concentration. The chain is NAD(P)H-quinone oxidoreductase subunit 2 from Acaryochloris marina (strain MBIC 11017).